A 73-amino-acid polypeptide reads, in one-letter code: ISALVSFLPILMHWWRAENDEARRCYNDPKCCDFVTNRAYAIASSVVSFYVPLCIMAFVYLRVFREAQKQVKK.

A helical transmembrane segment spans residues 1–12; it reads ISALVSFLPILM. The Extracellular segment spans residues 13–38; the sequence is HWWRAENDEARRCYNDPKCCDFVTNR. An intrachain disulfide couples Cys-25 to Cys-31. The chain crosses the membrane as a helical span at residues 39-64; it reads AYAIASSVVSFYVPLCIMAFVYLRVF. A cyanopindolol-binding site is contributed by Ser-44. The Cytoplasmic portion of the chain corresponds to 65–73; that stretch reads REAQKQVKK.

Belongs to the G-protein coupled receptor 1 family. Adrenergic receptor subfamily. ADRB1 sub-subfamily. Interacts (via C-terminus PDZ motif) with RAPGEF2; the interaction is direct. Interacts with GOPC, MAGI3 and DLG4. In terms of processing, homologous desensitization of the receptor is mediated by its phosphorylation by beta-adrenergic receptor kinase.

Its subcellular location is the cell membrane. It is found in the early endosome. Functionally, beta-adrenergic receptors mediate the catecholamine-induced activation of adenylate cyclase through the action of G proteins. This receptor binds epinephrine and norepinephrine with approximately equal affinity. Mediates Ras activation through G(s)-alpha- and cAMP-mediated signaling. In dorsal pons neurons, involved in the regulation of sleep/wake behaviors. The polypeptide is Beta-1 adrenergic receptor (ADRB1) (Meriones unguiculatus (Mongolian jird)).